We begin with the raw amino-acid sequence, 156 residues long: Snaclec 2 (156 aa).

A signal peptide spans 1–21; sequence MGRFIFLSSGLLVVFLSLSGA. 3 cysteine pairs are disulfide-bonded: cysteine 25–cysteine 36, cysteine 53–cysteine 150, and cysteine 125–cysteine 142. In terms of domain architecture, C-type lectin spans 32-151; the sequence is FDQHCYRAFD…CGDDYPFVCK (120 aa).

Belongs to the snaclec family. As to quaternary structure, heterodimer; disulfide-linked. Expressed by the venom gland.

Its subcellular location is the secreted. Functionally, interferes with one step of hemostasis (modulation of platelet aggregation, or coagulation cascade, for example). The polypeptide is Snaclec 2 (Bitis gabonica (Gaboon adder)).